The primary structure comprises 110 residues: DNA-directed RNA polymerase subunit omega (110 aa).

Belongs to the RNA polymerase subunit omega family. In terms of assembly, the RNAP catalytic core consists of 2 alpha, 1 beta, 1 beta' and 1 omega subunit. When a sigma factor is associated with the core the holoenzyme is formed, which can initiate transcription.

The enzyme catalyses RNA(n) + a ribonucleoside 5'-triphosphate = RNA(n+1) + diphosphate. Promotes RNA polymerase assembly. Latches the N- and C-terminal regions of the beta' subunit thereby facilitating its interaction with the beta and alpha subunits. This Mycobacterium leprae (strain Br4923) protein is DNA-directed RNA polymerase subunit omega.